The sequence spans 290 residues: 33 kDa chaperonin (290 aa).

2 disulfides stabilise this stretch: Cys235-Cys237 and Cys268-Cys271.

This sequence belongs to the HSP33 family. Post-translationally, under oxidizing conditions two disulfide bonds are formed involving the reactive cysteines. Under reducing conditions zinc is bound to the reactive cysteines and the protein is inactive.

The protein localises to the cytoplasm. Redox regulated molecular chaperone. Protects both thermally unfolding and oxidatively damaged proteins from irreversible aggregation. Plays an important role in the bacterial defense system toward oxidative stress. This Streptococcus mutans serotype c (strain ATCC 700610 / UA159) protein is 33 kDa chaperonin.